Here is a 272-residue protein sequence, read N- to C-terminus: 2-dehydro-3-deoxyphosphooctonate aldolase (272 aa).

It belongs to the KdsA family.

The protein localises to the cytoplasm. It carries out the reaction D-arabinose 5-phosphate + phosphoenolpyruvate + H2O = 3-deoxy-alpha-D-manno-2-octulosonate-8-phosphate + phosphate. It participates in carbohydrate biosynthesis; 3-deoxy-D-manno-octulosonate biosynthesis; 3-deoxy-D-manno-octulosonate from D-ribulose 5-phosphate: step 2/3. It functions in the pathway bacterial outer membrane biogenesis; lipopolysaccharide biosynthesis. The chain is 2-dehydro-3-deoxyphosphooctonate aldolase from Geotalea daltonii (strain DSM 22248 / JCM 15807 / FRC-32) (Geobacter daltonii).